Here is a 250-residue protein sequence, read N- to C-terminus: NADH-quinone oxidoreductase subunit B 2 (250 aa).

Cys-41, Cys-42, Cys-107, and Cys-137 together coordinate [4Fe-4S] cluster.

The protein belongs to the complex I 20 kDa subunit family. In terms of assembly, NDH-1 is composed of 14 different subunits. Subunits NuoB, C, D, E, F, and G constitute the peripheral sector of the complex. [4Fe-4S] cluster serves as cofactor.

Its subcellular location is the cell membrane. It catalyses the reaction a quinone + NADH + 5 H(+)(in) = a quinol + NAD(+) + 4 H(+)(out). NDH-1 shuttles electrons from NADH, via FMN and iron-sulfur (Fe-S) centers, to quinones in the respiratory chain. The immediate electron acceptor for the enzyme in this species is believed to be ubiquinone. Couples the redox reaction to proton translocation (for every two electrons transferred, four hydrogen ions are translocated across the cytoplasmic membrane), and thus conserves the redox energy in a proton gradient. The chain is NADH-quinone oxidoreductase subunit B 2 from Herpetosiphon aurantiacus (strain ATCC 23779 / DSM 785 / 114-95).